A 520-amino-acid chain; its full sequence is Putative cytochrome P450 CYP13A3 (520 aa).

C464 is a heme binding site.

This sequence belongs to the cytochrome P450 family. Requires heme as cofactor.

Its function is as follows. Cytochromes P450 are a group of heme-thiolate monooxygenases. They oxidize a variety of structurally unrelated compounds, including steroids, fatty acids, and xenobiotics. In Caenorhabditis elegans, this protein is Putative cytochrome P450 CYP13A3 (cyp-13A3).